Consider the following 305-residue polypeptide: UDP-3-O-acyl-N-acetylglucosamine deacetylase (305 aa).

Zn(2+) contacts are provided by His78, His237, and Asp241. His264 (proton donor) is an active-site residue.

It belongs to the LpxC family. Requires Zn(2+) as cofactor.

It catalyses the reaction a UDP-3-O-[(3R)-3-hydroxyacyl]-N-acetyl-alpha-D-glucosamine + H2O = a UDP-3-O-[(3R)-3-hydroxyacyl]-alpha-D-glucosamine + acetate. The protein operates within glycolipid biosynthesis; lipid IV(A) biosynthesis; lipid IV(A) from (3R)-3-hydroxytetradecanoyl-[acyl-carrier-protein] and UDP-N-acetyl-alpha-D-glucosamine: step 2/6. Its function is as follows. Catalyzes the hydrolysis of UDP-3-O-myristoyl-N-acetylglucosamine to form UDP-3-O-myristoylglucosamine and acetate, the committed step in lipid A biosynthesis. This Paraburkholderia xenovorans (strain LB400) protein is UDP-3-O-acyl-N-acetylglucosamine deacetylase.